The primary structure comprises 228 residues: 3-oxoadipate CoA-transferase subunit A (228 aa).

Position 25–31 (25–31) interacts with CoA; that stretch reads GGFGTAG.

The protein belongs to the 3-oxoacid CoA-transferase subunit A family. In terms of assembly, heterodimer.

It carries out the reaction 3-oxoadipate + succinyl-CoA = 3-oxoadipyl-CoA + succinate. It participates in aromatic compound metabolism; beta-ketoadipate pathway; acetyl-CoA and succinyl-CoA from 3-oxoadipate: step 1/2. The chain is 3-oxoadipate CoA-transferase subunit A (pcaI) from Acinetobacter baylyi (strain ATCC 33305 / BD413 / ADP1).